The chain runs to 619 residues: MVSKLSLFRANSLPFPVISSYSARFILKPYPKPKTLIFCVFSSNLSSTTFPYGPSLLKGKKPVLDDIRLASIGRDRDAHRGKIGEFDESIEKDVLLNEDEFTRVFEISAIRVPAKDCFALENRLRGHLLNWPRIRNIARVPGDEIEEDVVKLLGRETDEEEEDEDSVVDSVNRRIRGKAEGDGERLSSVLHRDKLARTFNSTGYLKFRNLAKISRPKRKRKTERTREGKEKEIASRRNEMAVVEVVETRGGEEDFEGLLGEGYGSRGRWRGSTRLLLLDEKYSGEEVQDLPEAIKVLFAEAKMADASLSFELVKCRLTLFYDYWPMIEILEAVLPKGMIVPSAFEMVGHIAHLNLRDEHLPYKRLIAKVVLDKNQPKIQTVVNKIDPIHNDFRTMQLEVLAGNHSLVTLVVENGLRFHVDLARVYWNSKLGTERQRLLLGFDQNDVVCDVFAGVGPIALAAARIVKRVYANDLNPHAVEFMEQNSVVNKLEKRIEIFNMDGRRFIKAMFSSEKGQKVTQVVMNLPKDAAESLDAFRGVYNDRHRDEGLSFPTIHVYGFSKASDPEFDFHERIRIALSEVAVDVKMRKVRLVAPGKWMLCASFILPKNVAFSRKNLSYVD.

Residues 1 to 10 (MVSKLSLFRA) constitute a mitochondrion transit peptide. S-adenosyl-L-methionine contacts are provided by residues R434, 472 to 473 (DL), 500 to 501 (DG), and N523.

This sequence belongs to the class I-like SAM-binding methyltransferase superfamily. TRM5/TYW2 family. In terms of assembly, monomer.

It localises to the mitochondrion matrix. The protein localises to the nucleus. The protein resides in the cytoplasm. It catalyses the reaction guanosine(37) in tRNA + S-adenosyl-L-methionine = N(1)-methylguanosine(37) in tRNA + S-adenosyl-L-homocysteine + H(+). Functionally, specifically methylates the N1 position of guanosine-37 in various cytoplasmic and mitochondrial tRNAs. Methylation is not dependent on the nature of the nucleoside 5' of the target nucleoside. This is the first step in the biosynthesis of wybutosine (yW), a modified base adjacent to the anticodon of tRNAs and required for accurate decoding. This is tRNA (guanine(37)-N(1))-methyltransferase 2 from Arabidopsis thaliana (Mouse-ear cress).